The primary structure comprises 84 residues: uncharacterized protein (84 aa).

This is an uncharacterized protein from Vaccinia virus (strain Copenhagen) (VACV).